The following is a 587-amino-acid chain: Sorting nexin 2A (587 aa).

Disordered stretches follow at residues 1–78 (MMGS…DSDP) and 115–151 (SPFD…SSSD). Polar residues-rich tracts occupy residues 42 to 59 (NGDT…TLSN) and 123 to 134 (SEINGTEDNSLH). Low complexity predominate over residues 135–150 (SQFSDSLSRSPSSSSS). The residue at position 144 (Ser144) is a Phosphoserine. The 121-residue stretch at 157–277 (VSNPQKEQEI…KVFLQVQGKL (121 aa)) folds into the PX domain. Positions 201, 227, and 244 each coordinate a 1,2-diacyl-sn-glycero-3-phospho-(1D-myo-inositol-3-phosphate). Residues 331 to 586 (LRQSVSNDWG…TSQYDREKQS (256 aa)) enclose the BAR domain.

This sequence belongs to the sorting nexin family. In terms of assembly, homodimer. Heterodimer with SNX1 or SNX2A. Component of the retromer complex which consists of VPS29 (MAG1), VPS26 (VPS26A or VPS26B), VPS35 (VPS35A or VPS35B or VPS35C), VPS5/17 (SNX1 or SNX2A or SNX2B). As to expression, ubiquitously expressed but at a lower level in flowers, siliques, and senescing leaves.

It localises to the cytoplasm. It is found in the endosome membrane. Its subcellular location is the prevacuolar compartment membrane. The protein resides in the golgi apparatus. The protein localises to the trans-Golgi network membrane. Functionally, plays a role in vesicular protein sorting. Acts at the crossroads between the secretory and endocytic pathways. Is involved in the endosome to vacuole protein transport and, as component of the membrane-associated retromer complex, is also involved in endosome-to-Golgi retrograde transport. Also involved in the efficient sorting of seed storage protein globulin 12S. The protein is Sorting nexin 2A (SNX2A) of Arabidopsis thaliana (Mouse-ear cress).